Consider the following 1130-residue polypeptide: Integrin alpha-6 (1130 aa).

Positions 1–23 (MAAAGQLCLLYLSAGLLSRLGAA) are cleaved as a signal peptide. The Extracellular portion of the chain corresponds to 24-1050 (FNLDTREDNV…FPSKTVAQYS (1027 aa)). FG-GAP repeat units lie at residues 30 to 95 (EDNV…GPCT), 101 to 166 (NDAD…IEDD), 176 to 229 (DGRL…FFDM), 283 to 339 (EQPD…KSAH), 340 to 402 (LLPE…RWNN), 403 to 458 (VKPI…GINT), and 459 to 518 (KPTQ…VTPN). N-linked (GlcNAc...) asparagine glycosylation occurs at Asn78. Cystine bridges form between Cys86–Cys94, Cys131–Cys154, and Cys175–Cys188. Residues Asn223 and Asn323 are each glycosylated (N-linked (GlcNAc...) asparagine). 4 residues coordinate Ca(2+): Asp363, Asn365, Asp367, and Asp371. N-linked (GlcNAc...) asparagine glycosylation is present at Asn409. Ca(2+) is bound by residues Asp425, Asn427, Asp429, Tyr431, Asp433, Asp480, Asp482, Asn484, Tyr486, and Asp488. Disulfide bonds link Cys528–Cys535, Cys541–Cys601, Cys665–Cys671, and Cys765–Cys776. Asn770, Asn787, Asn930, and Asn966 each carry an N-linked (GlcNAc...) asparagine glycan. Disulfide bonds link Cys920–Cys967 and Cys973–Cys978. Asn997 is a glycosylation site (N-linked (GlcNAc...) asparagine). A helical transmembrane segment spans residues 1051-1076 (GVPWWIILVAILAGILMLALLVFILW). Residues Val1059 and Gly1064 each carry the phosphoserine modification. Residues 1077–1083 (KCGFFKR) form an interaction with HPS5 region. Over 1077–1130 (KCGFFKRSRYDDSVPRYHAVRIRKEEREIKDEKYIDNLEKKQWITKWNENESYS) the chain is Cytoplasmic. Cys1078 carries the S-palmitoyl cysteine; by DHHC3 lipid modification. The GFFKR motif motif lies at 1079–1083 (GFFKR). Phosphoserine is present on Arg1103.

This sequence belongs to the integrin alpha chain family. As to quaternary structure, heterodimer of an alpha and a beta subunit. The alpha subunit is composed of a heavy and a light chain linked by a disulfide bond. Alpha-6 associates with either beta-1 (ITGB1) or beta-4 (ITGB4) to form ITGA6:ITGB1 and ITGA6:ITGB4, respectively. ITGA6:ITGB1 is found in a complex with CD9; interaction takes place in oocytes and is involved in sperm-egg fusion. ITGA6:ITGB4 is found in a ternary complex with NRG1 and ERBB3. ITGA6:ITGB4 is found in a ternary complex with IGF1 and IGF1R. ITGA6:ITGB4 interacts with IGF2. Interacts with ADAM9. Interacts with RAB21. Interacts with MDK. ITGA6:ITGB1 interacts with MDK; this interaction mediates MDK-induced neurite outgrowth. Interacts with CD82; this interaction down-regulates ITGA6-mediated cell adhesion. Post-translationally, isoforms containing segment A, but not segment B, are the major targets for PMA-induced phosphorylation. Phosphorylation occurs on 'Ser-1103' of isoform alpha-6X1X2A. Phosphorylation is not required for the induction of integrin alpha-6A/beta-1 high affinity but may reduce the affinity for ligand. Undergoes PLAU-mediated cleavage at residues Arg-634-635-Arg in a time-dependent manner to produce processed integrin alpha-6 (alpha6p). Production of alpha6p enhances prostate cancer cell invasion and migration. In terms of processing, palmitoylation by DHHC3 enhances stability and cell surface expression. In terms of tissue distribution, integrin alpha-6/beta-4 is predominantly expressed by epithelia. Isoforms containing segment X1 are ubiquitously expressed. Isoforms containing segment X1X2 are expressed in heart, kidney, placenta, colon, duodenum, myoblasts and myotubes, and in a limited number of cell lines; they are always coexpressed with the ubiquitous isoform containing segment X1. In some tissues (e.g. Salivary gland), isoforms containing cytoplasmic segment A and isoforms containing segment B are detected while in others, only isoforms containing one cytoplasmic segment are found (segment A in epidermis and segment B in kidney). Processed integrin alpha-6: Expressed at low levels in normal prostate tissue with elevated levels in prostate cancer tissue (at protein level).

The protein localises to the cell membrane. Integrin alpha-6/beta-1 (ITGA6:ITGB1) is a receptor for laminin on platelets. Integrin alpha-6/beta-1 (ITGA6:ITGB1) is present in oocytes and is involved in sperm-egg fusion. Integrin alpha-6/beta-4 (ITGA6:ITGB4) is a receptor for laminin in epithelial cells and it plays a critical structural role in the hemidesmosome. ITGA6:ITGB4 binds to NRG1 (via EGF domain) and this binding is essential for NRG1-ERBB signaling. ITGA6:ITGB4 binds to IGF1 and this binding is essential for IGF1 signaling. ITGA6:ITGB4 binds to IGF2 and this binding is essential for IGF2 signaling. The polypeptide is Integrin alpha-6 (ITGA6) (Homo sapiens (Human)).